Reading from the N-terminus, the 535-residue chain is EH domain-containing protein 3 (535 aa).

Met-1 is modified (N-acetylmethionine). Residues 55 to 286 enclose the Dynamin-type G domain; sequence FDNKPMVLLV…DLFKDIQSLP (232 aa). The segment at 65 to 72 is G1 motif; it reads GQYSTGKT. Residue 65–72 coordinates ATP; that stretch reads GQYSTGKT. The interval 91-92 is G2 motif; that stretch reads EP. The G3 motif stretch occupies residues 153 to 156; that stretch reads DTPG. Residues 198–227 are a coiled coil; the sequence is DEFSEVIKALKNHEDKMRVVLNKADQIETQ. Residues 219 to 222 are G4 motif; sequence NKAD. ATP is bound at residue Lys-220. Ile-243 is a region of interest (G5 motif). Residue Trp-258 coordinates ATP. A Glycyl lysine isopeptide (Lys-Gly) (interchain with G-Cter in SUMO) cross-link involves residue Lys-315. Phosphoserine occurs at positions 349 and 456. An EH domain is found at 444-532; that stretch reads DKPMYDEIFY…AHLLPPSKRK (89 aa). Positions 476 to 511 constitute an EF-hand domain; sequence LPNSVLGKIWKLADIDKDGMLDDEEFALANHLIKVK. Ca(2+) contacts are provided by Asp-489, Asp-491, Asp-493, Met-495, and Glu-500. A Glycyl lysine isopeptide (Lys-Gly) (interchain with G-Cter in SUMO) cross-link involves residue Lys-511.

It belongs to the TRAFAC class dynamin-like GTPase superfamily. Dynamin/Fzo/YdjA family. EHD subfamily. In terms of assembly, homooligomer, and heterooligomer with EHD1, EHD2 and EHD4, ATP-binding is required for heterooligomerization. Interacts with PACSIN1. Interacts with PACSIN2. Interacts (via EH domain) with MICALL1. Interacts (via EH domain) with RAB11FIP2. Interacts with ANK2. Interacts with CACNA1GG and CACNA1H.

The protein resides in the recycling endosome membrane. It is found in the cell membrane. The protein localises to the cell projection. Its subcellular location is the cilium membrane. In terms of biological role, ATP- and membrane-binding protein that controls membrane reorganization/tubulation upon ATP hydrolysis. In vitro causes tubulation of endocytic membranes. Binding to phosphatidic acid induces its membrane tubulation activity. Plays a role in endocytic transport. Involved in early endosome to recycling endosome compartment (ERC), retrograde early endosome to Golgi, and endosome to plasma membrane (rapid recycling) protein transport. Involved in the regulation of Golgi maintenance and morphology. Involved in the recycling of internalized D1 dopamine receptor. Plays a role in cardiac protein trafficking probably implicating ANK2. Involved in the ventricular membrane targeting of SLC8A1 and CACNA1C and probably the atrial membrane localization of CACNA1GG and CACNA1H implicated in the regulation of atrial myocyte excitability and cardiac conduction. In conjunction with EHD4 may be involved in endocytic trafficking of KDR/VEGFR2 implicated in control of glomerular function. Involved in the rapid recycling of integrin beta-3 implicated in cell adhesion maintenance. Involved in the unidirectional retrograde dendritic transport of endocytosed BACE1 and in efficient sorting of BACE1 to axons implicating a function in neuronal APP processing. Plays a role in the formation of the ciliary vesicle, an early step in cilium biogenesis; possibly sharing redundant functions with Ehd1. In Rattus norvegicus (Rat), this protein is EH domain-containing protein 3.